We begin with the raw amino-acid sequence, 279 residues long: Thymidylate synthase (279 aa).

A dUMP-binding site is contributed by arginine 133–arginine 134. The active-site Nucleophile is the cysteine 154. Residues arginine 178 to aspartate 181, asparagine 189, and histidine 219 to tyrosine 221 each bind dUMP. Aspartate 181 is a (6R)-5,10-methylene-5,6,7,8-tetrahydrofolate binding site. (6R)-5,10-methylene-5,6,7,8-tetrahydrofolate is bound at residue alanine 278.

Belongs to the thymidylate synthase family. Bacterial-type ThyA subfamily. Homodimer.

Its subcellular location is the cytoplasm. The enzyme catalyses dUMP + (6R)-5,10-methylene-5,6,7,8-tetrahydrofolate = 7,8-dihydrofolate + dTMP. Its pathway is pyrimidine metabolism; dTTP biosynthesis. Functionally, catalyzes the reductive methylation of 2'-deoxyuridine-5'-monophosphate (dUMP) to 2'-deoxythymidine-5'-monophosphate (dTMP) while utilizing 5,10-methylenetetrahydrofolate (mTHF) as the methyl donor and reductant in the reaction, yielding dihydrofolate (DHF) as a by-product. This enzymatic reaction provides an intracellular de novo source of dTMP, an essential precursor for DNA biosynthesis. The polypeptide is Thymidylate synthase (Streptococcus pneumoniae (strain 70585)).